The sequence spans 429 residues: GTPase Obg (429 aa).

Residues 1-158 (MFVDQVKIYV…RNVQLELKVL (158 aa)) enclose the Obg domain. The interval 124–145 (RGNKRFATPANPAPELSENGEP) is disordered. Residues 159–329 (ADVGLVGFPS…LLLAIADKLE (171 aa)) form the OBG-type G domain. GTP contacts are provided by residues 165 to 172 (GFPSVGKS), 190 to 194 (FTTIV), 212 to 215 (DLPG), 282 to 285 (NKMD), and 310 to 312 (SAV). Ser-172 and Thr-192 together coordinate Mg(2+). Residues 351 to 429 (KYVAEEPDFE…LLDYEFEFMD (79 aa)) enclose the OCT domain.

This sequence belongs to the TRAFAC class OBG-HflX-like GTPase superfamily. OBG GTPase family. In terms of assembly, monomer. Mg(2+) is required as a cofactor.

Its subcellular location is the cytoplasm. Functionally, an essential GTPase which binds GTP, GDP and possibly (p)ppGpp with moderate affinity, with high nucleotide exchange rates and a fairly low GTP hydrolysis rate. Plays a role in control of the cell cycle, stress response, ribosome biogenesis and in those bacteria that undergo differentiation, in morphogenesis control. The chain is GTPase Obg from Listeria monocytogenes serotype 4b (strain F2365).